A 177-amino-acid chain; its full sequence is MNNIGEIISNFEGIIGALLGVIVTLILTHILKHFGQIKFYIVDFEIYFKTDNDGWGTNVMPSKDEAKQIEIHSQIEIYNGAEIPKVLREIKFCFYKNTNLIVSVTPDDKATTEEFAEFGYYRDKLFNINLPSKQIIAINIIKFLNEKETKQVKKCNRVYLEAKDHNGKMYKVFLGEF.

Residues 11 to 31 (FEGIIGALLGVIVTLILTHIL) form a helical membrane-spanning segment.

Its subcellular location is the cell membrane. The polypeptide is SPbeta prophage-derived uncharacterized protein YopI (yopI) (Bacillus subtilis (strain 168)).